The following is a 47-amino-acid chain: Delta-actitoxin-Axm1e (47 aa).

Cystine bridges form between Cys4-Cys44, Cys6-Cys34, and Cys27-Cys45.

Belongs to the sea anemone sodium channel inhibitory toxin family. Type I subfamily.

The protein resides in the secreted. Its subcellular location is the nematocyst. Binds specifically to voltage-gated sodium channels (Nav), thereby delaying their inactivation. This toxin is active on a variety of voltage-gated sodium channels (Nav1.1/SCN1A, Nav1.2/SCN2A, Nav1.3/SCN3A, Nav1.4/SCN4A, Nav1.5/SCN5A and Nav1.6/SCN8A). The protein is Delta-actitoxin-Axm1e of Anthopleura xanthogrammica (Giant green sea anemone).